Consider the following 450-residue polypeptide: Tubulin alpha-6 chain (450 aa).

GTP-binding residues include glutamine 11, glutamate 71, glycine 144, threonine 145, threonine 179, asparagine 206, and asparagine 228. Mg(2+) is bound at residue glutamate 71. Residue glutamate 254 is part of the active site.

Belongs to the tubulin family. As to quaternary structure, dimer of alpha and beta chains. A typical microtubule is a hollow water-filled tube with an outer diameter of 25 nm and an inner diameter of 15 nM. Alpha-beta heterodimers associate head-to-tail to form protofilaments running lengthwise along the microtubule wall with the beta-tubulin subunit facing the microtubule plus end conferring a structural polarity. Microtubules usually have 13 protofilaments but different protofilament numbers can be found in some organisms and specialized cells. Mg(2+) is required as a cofactor. In terms of processing, undergoes a tyrosination/detyrosination cycle, the cyclic removal and re-addition of a C-terminal tyrosine residue by the enzymes tubulin tyrosine carboxypeptidase (TTCP) and tubulin tyrosine ligase (TTL), respectively.

The protein localises to the cytoplasm. It is found in the cytoskeleton. The catalysed reaction is GTP + H2O = GDP + phosphate + H(+). Tubulin is the major constituent of microtubules, a cylinder consisting of laterally associated linear protofilaments composed of alpha- and beta-tubulin heterodimers. Microtubules grow by the addition of GTP-tubulin dimers to the microtubule end, where a stabilizing cap forms. Below the cap, tubulin dimers are in GDP-bound state, owing to GTPase activity of alpha-tubulin. In Zea mays (Maize), this protein is Tubulin alpha-6 chain (TUBA6).